The following is a 578-amino-acid chain: Potassium-transporting ATPase potassium-binding subunit (578 aa).

A run of 10 helical transmembrane segments spans residues 3–23, 65–85, 134–154, 175–195, 261–281, 293–313, 397–417, 435–455, 503–523, and 543–563; these read NAIL…IPLG, SFSV…LNLL, GLTV…FALI, IVLY…VSQG, FSNL…CFTF, AIFI…GVSE, GLYG…LMVG, AMLI…LASI, IGLI…AIAG, and LLFI…SFFP.

Belongs to the KdpA family. The system is composed of three essential subunits: KdpA, KdpB and KdpC.

The protein resides in the cell membrane. Its function is as follows. Part of the high-affinity ATP-driven potassium transport (or Kdp) system, which catalyzes the hydrolysis of ATP coupled with the electrogenic transport of potassium into the cytoplasm. This subunit binds the extracellular potassium ions and delivers the ions to the membrane domain of KdpB through an intramembrane tunnel. The protein is Potassium-transporting ATPase potassium-binding subunit of Clostridium perfringens (strain ATCC 13124 / DSM 756 / JCM 1290 / NCIMB 6125 / NCTC 8237 / Type A).